We begin with the raw amino-acid sequence, 507 residues long: Cytochrome P450 monooxygenase helB3 (507 aa).

A signal peptide spans 1–25 (MAVATLISILFAVLALRLCYLLIHA). N-linked (GlcNAc...) asparagine glycosylation is found at N111, N206, and N339. C435 is a heme binding site.

It belongs to the cytochrome P450 family. The cofactor is heme.

Its pathway is mycotoxin biosynthesis. Functionally, cytochrome P450 monooxygenase; part of the gene cluster that mediates the biosynthesis of helvolic acid, an antibacterial nortriterpenoid. Protostadienol synthase helA cyclizes (3S)-oxidosqualene to (17Z)-protosta-17(20),24-dien-3-beta-ol (protostadienol). The synthesis of protostadienol is followed by several steps of monooxygenation, dehydrogenation, and acyl transfer to yield the final helvolic acid. Following the cyclization to the tetracyclic protostadienol by helA, cytochrome P450 monooxygenases helB1-mediated and helB2-mediated oxidation at C-4 and C-16, acyltransferase helD2-dependent acetylation of 16-OH, oxidation of C-21 by cytochrome P450 monooxygenase helB4, and short chain dehydrogenase helC-dependent oxidative decarboxylation yield the fusidane skeleton. This intermediate is further modified in three additional steps mediated by the cytochrome P450 monooxygenase helB3, the acyltransferase helD1, and the 3-ketosteroid 1-dehydrogenase helE to give helvolic acid. Compared with the late stages in the biosynthesis of helvolic acid, enzymes involved in the early stage modifications act in a relatively strict order. The hydroxylation of C-16 by helB1 and subsequent acetylation by helD2 should occur before the helB3-mediated oxidation of C-21. C-4 demethylation in fusidane-type antibiotics proceeds in an unusual manner though it is also achieved by oxidative decarboxylation. The methyl group at C-4 beta position is oxidized by helB1 and subsequently removed by the short chain dehydrogenase helC. The polypeptide is Cytochrome P450 monooxygenase helB3 (Aspergillus fumigatus (strain ATCC MYA-4609 / CBS 101355 / FGSC A1100 / Af293) (Neosartorya fumigata)).